The primary structure comprises 354 residues: Aspartate carbamoyltransferase catalytic subunit (354 aa).

Positions 67 and 68 each coordinate carbamoyl phosphate. Residue Lys-95 participates in L-aspartate binding. Residues Arg-117, His-150, and Gln-153 each contribute to the carbamoyl phosphate site. The L-aspartate site is built by Arg-190 and Arg-261. 2 residues coordinate carbamoyl phosphate: Gly-302 and Pro-303.

This sequence belongs to the aspartate/ornithine carbamoyltransferase superfamily. ATCase family. In terms of assembly, heterododecamer (2C3:3R2) of six catalytic PyrB chains organized as two trimers (C3), and six regulatory PyrI chains organized as three dimers (R2).

It carries out the reaction carbamoyl phosphate + L-aspartate = N-carbamoyl-L-aspartate + phosphate + H(+). The protein operates within pyrimidine metabolism; UMP biosynthesis via de novo pathway; (S)-dihydroorotate from bicarbonate: step 2/3. Its function is as follows. Catalyzes the condensation of carbamoyl phosphate and aspartate to form carbamoyl aspartate and inorganic phosphate, the committed step in the de novo pyrimidine nucleotide biosynthesis pathway. In Synechococcus sp. (strain RCC307), this protein is Aspartate carbamoyltransferase catalytic subunit.